Reading from the N-terminus, the 594-residue chain is Parathyroid hormone/parathyroid hormone-related peptide receptor (594 aa).

The N-terminal stretch at methionine 1–alanine 28 is a signal peptide. Residues aspartate 29–leucine 188 lie on the Extracellular side of the membrane. 3 cysteine pairs are disulfide-bonded: cysteine 48–cysteine 117, cysteine 108–cysteine 149, and cysteine 132–cysteine 171. The segment at aspartate 66 to arginine 102 is disordered. N-linked (GlcNAc...) asparagine glycans are attached at residues asparagine 152, asparagine 162, asparagine 167, and asparagine 177. Residues glycine 189 to isoleucine 209 form a helical membrane-spanning segment. At leucine 210–isoleucine 223 the chain is on the cytoplasmic side. A helical membrane pass occupies residues histidine 224–valine 244. Topologically, residues leucine 245–threonine 295 are extracellular. The helical transmembrane segment at asparagine 296–phenylalanine 316 threads the bilayer. Over serine 317–lysine 319 the chain is Cytoplasmic. The helical transmembrane segment at lysine 320–tryptophan 340 threads the bilayer. Topologically, residues valine 341–lysine 361 are extracellular. The helical transmembrane segment at tryptophan 362 to isoleucine 382 threads the bilayer. The Cytoplasmic segment spans residues valine 383 to arginine 405. The chain crosses the membrane as a helical span at residues lysine 406–methionine 426. Residues alanine 427–valine 440 lie on the Extracellular side of the membrane. The helical transmembrane segment at glutamine 441–cysteine 461 threads the bilayer. At phenylalanine 462 to methionine 594 the chain is on the cytoplasmic side. Positions tryptophan 475–tryptophan 478 match the Important for interaction with G proteins motif. A disordered region spans residues proline 525–methionine 594. Low complexity predominate over residues threonine 543 to alanine 558. A Phosphothreonine modification is found at threonine 552.

It belongs to the G-protein coupled receptor 2 family. Homodimer in the absence of bound ligand. Peptide hormone binding leads to dissociation of the homodimer. Post-translationally, N-glycosylated.

The protein localises to the cell membrane. In terms of biological role, G-protein-coupled receptor for parathyroid hormone (PTH) and for parathyroid hormone-related peptide (PTHLH). Ligand binding causes a conformation change that triggers signaling via guanine nucleotide-binding proteins (G proteins) and modulates the activity of downstream effectors, such as adenylate cyclase (cAMP). PTH1R is coupled to G(s) G alpha proteins and mediates activation of adenylate cyclase activity. PTHLH dissociates from PTH1R more rapidly than PTH; as consequence, the cAMP response induced by PTHLH decays faster than the response induced by PTH. This is Parathyroid hormone/parathyroid hormone-related peptide receptor (PTH1R) from Pongo abelii (Sumatran orangutan).